The chain runs to 433 residues: 23S rRNA (uracil(1939)-C(5))-methyltransferase RlmD (433 aa).

In terms of domain architecture, TRAM spans 10 to 68; that stretch reads RTTTRQIITVSVNDLDSFGQGVARHNGKTLFIPGLLPQENAEVTVTEDKKQYARAKVVR. [4Fe-4S] cluster-binding residues include Cys-81, Cys-87, Cys-90, and Cys-162. S-adenosyl-L-methionine is bound by residues Gln-265, Phe-294, Asn-299, Glu-315, Asn-342, and Asp-363. Cys-389 serves as the catalytic Nucleophile.

Belongs to the class I-like SAM-binding methyltransferase superfamily. RNA M5U methyltransferase family. RlmD subfamily.

It carries out the reaction uridine(1939) in 23S rRNA + S-adenosyl-L-methionine = 5-methyluridine(1939) in 23S rRNA + S-adenosyl-L-homocysteine + H(+). Functionally, catalyzes the formation of 5-methyl-uridine at position 1939 (m5U1939) in 23S rRNA. The chain is 23S rRNA (uracil(1939)-C(5))-methyltransferase RlmD from Escherichia coli O6:K15:H31 (strain 536 / UPEC).